The primary structure comprises 309 residues: CDK-activating kinase assembly factor MAT1 (309 aa).

The segment at 6 to 50 (CPRCKTTKYRNPSLKLMVNVCGHTLCESCVELLFVRGSGSCQECD) adopts an RING-type zinc-finger fold. In terms of domain architecture, UIM spans 142–161 (REQEELEEALEMEKHENEQR).

Associates with CDK7 and cyclin H.

The protein localises to the nucleus. Stabilizes the cyclin H-CDK7 complex to form a functional CDK-activating kinase (CAK) enzymatic complex. The polypeptide is CDK-activating kinase assembly factor MAT1 (mnat1) (Xenopus laevis (African clawed frog)).